A 428-amino-acid polypeptide reads, in one-letter code: 4-hydroxy-3-methylbut-2-en-1-yl diphosphate synthase (flavodoxin) (428 aa).

4 residues coordinate [4Fe-4S] cluster: Cys-300, Cys-303, Cys-346, and Glu-353.

This sequence belongs to the IspG family. Requires [4Fe-4S] cluster as cofactor.

The catalysed reaction is (2E)-4-hydroxy-3-methylbut-2-enyl diphosphate + oxidized [flavodoxin] + H2O + 2 H(+) = 2-C-methyl-D-erythritol 2,4-cyclic diphosphate + reduced [flavodoxin]. Its pathway is isoprenoid biosynthesis; isopentenyl diphosphate biosynthesis via DXP pathway; isopentenyl diphosphate from 1-deoxy-D-xylulose 5-phosphate: step 5/6. Its function is as follows. Converts 2C-methyl-D-erythritol 2,4-cyclodiphosphate (ME-2,4cPP) into 1-hydroxy-2-methyl-2-(E)-butenyl 4-diphosphate. In Methylobacillus flagellatus (strain ATCC 51484 / DSM 6875 / VKM B-1610 / KT), this protein is 4-hydroxy-3-methylbut-2-en-1-yl diphosphate synthase (flavodoxin).